We begin with the raw amino-acid sequence, 509 residues long: Solute carrier family 2, facilitated glucose transporter member 4 (509 aa).

Over 1-24 (MPSGFQQIGSEDGEPPRQRVTGTL) the chain is Cytoplasmic. Residues 7–13 (QIGSEDG) are interaction with SRFBP1. A Phosphoserine modification is found at serine 10. A helical transmembrane segment spans residues 25-45 (VLAVFSAVLGSLQFGYNIGVI). The Extracellular segment spans residues 46 to 81 (NAPQKVIEQSYNETWLGRQGPEGPGSIPPGTLTTLW). The N-linked (GlcNAc...) asparagine glycan is linked to asparagine 57. A helical transmembrane segment spans residues 82-102 (ALSVAIFSVGGMISSFLIGII). Residues 103 to 111 (SQWLGRKRA) lie on the Cytoplasmic side of the membrane. A helical transmembrane segment spans residues 112-132 (MLFNNALAVLGGTLMGLAKAA). The Extracellular segment spans residues 133 to 142 (ASYEMLILGR). A helical transmembrane segment spans residues 143–163 (FFIGAYSGLTSGLVPMYVGEI). Over 164–171 (APTHLRGA) the chain is Cytoplasmic. A helical membrane pass occupies residues 172-192 (LGTLNQLAIVTGILIAQVLGL). Glutamine 177 is a D-glucose binding site. Over 193–200 (ESMLGTAT) the chain is Extracellular. The chain crosses the membrane as a helical span at residues 201 to 221 (LWPLLLGITVLPALLQMVLLP). Over 222-287 (LCPESPRYLY…LLGSHTHRQP (66 aa)) the chain is Cytoplasmic. Cysteine 223 carries the S-palmitoyl cysteine lipid modification. Serine 274 is modified (phosphoserine; by SGK1). A helical membrane pass occupies residues 288–308 (LVIAIVLQLSQQLSGINAVFY). Residues 298–299 (QQ) and asparagine 304 each bind D-glucose. Over 309 to 323 (YSTSIFESAGVEKPA) the chain is Extracellular. Residues 324 to 344 (YATIGAGVVNTVFTLVSVFLV) form a helical membrane-spanning segment. Asparagine 333 is a D-glucose binding site. Residues 345-353 (ERAGRRTLH) lie on the Cytoplasmic side of the membrane. The helical transmembrane segment at 354–374 (LLGLAGMCGCAILMTVALLLL) threads the bilayer. Residues 375 to 384 (ERVPAMSYVS) are Extracellular-facing. A helical membrane pass occupies residues 385–405 (IVAIFGFVAFFEIGPGPIPWF). Glutamate 396 and tryptophan 404 together coordinate D-glucose. Topologically, residues 406–417 (IVAELFSQGPRP) are cytoplasmic. A helical membrane pass occupies residues 418–438 (AAMAVAGFSNWTCNFIIGMGF). Residues 439 to 445 (QYVADAM) are Extracellular-facing. A helical membrane pass occupies residues 446 to 466 (GPYVFLLFAVLLLGFFIFTFL). At 467-509 (KVPETRGRTFDQISAVFHRTPSLLEQEVKPSTELEYLGPDEHD) the chain is on the cytoplasmic side. Position 486 is a phosphothreonine (threonine 486). Residue serine 488 is modified to Phosphoserine. The short motif at 489-490 (LL) is the Dileucine internalization motif element.

Belongs to the major facilitator superfamily. Sugar transporter (TC 2.A.1.1) family. Glucose transporter subfamily. As to quaternary structure, binds to DAXX. Interacts via its N-terminus with SRFBP1. Interacts with NDUFA9. Interacts with TRARG1; the interaction is required for proper SLC2A4 recycling after insulin stimulation. Sumoylated. Post-translationally, palmitoylated. Palmitoylation by ZDHHC7 controls the insulin-dependent translocation of GLUT4 to the plasma membrane.

The protein localises to the cell membrane. The protein resides in the endomembrane system. Its subcellular location is the cytoplasm. It localises to the perinuclear region. The catalysed reaction is D-glucose(out) = D-glucose(in). Functionally, insulin-regulated facilitative glucose transporter, which plays a key role in removal of glucose from circulation. Response to insulin is regulated by its intracellular localization: in the absence of insulin, it is efficiently retained intracellularly within storage compartments in muscle and fat cells. Upon insulin stimulation, translocates from these compartments to the cell surface where it transports glucose from the extracellular milieu into the cell. This is Solute carrier family 2, facilitated glucose transporter member 4 from Bos taurus (Bovine).